The sequence spans 454 residues: Guanine deaminase (454 aa).

Residues histidine 82 and histidine 84 each contribute to the Zn(2+) site. Substrate-binding positions include 84-87 (HAPQ), 213-214 (RF), 240-243 (HISE), and aspartate 330. Residues histidine 240 and aspartate 330 each coordinate Zn(2+). Phosphoserine is present on serine 453.

It belongs to the metallo-dependent hydrolases superfamily. ATZ/TRZ family. As to quaternary structure, homodimer. Requires Zn(2+) as cofactor.

The enzyme catalyses guanine + H2O + H(+) = xanthine + NH4(+). Its pathway is purine metabolism; guanine degradation; xanthine from guanine: step 1/1. In terms of biological role, catalyzes the hydrolytic deamination of guanine, producing xanthine and ammonia. The sequence is that of Guanine deaminase from Mus musculus (Mouse).